We begin with the raw amino-acid sequence, 139 residues long: NADPH-dependent 7-cyano-7-deazaguanine reductase (139 aa).

Residue C34 is the Thioimide intermediate of the active site. Residue D41 is the Proton donor of the active site. Residues 56 to 58 (VEL) and 75 to 76 (HE) each bind substrate.

Belongs to the GTP cyclohydrolase I family. QueF type 1 subfamily.

Its subcellular location is the cytoplasm. It catalyses the reaction 7-aminomethyl-7-carbaguanine + 2 NADP(+) = 7-cyano-7-deazaguanine + 2 NADPH + 3 H(+). It functions in the pathway tRNA modification; tRNA-queuosine biosynthesis. Catalyzes the NADPH-dependent reduction of 7-cyano-7-deazaguanine (preQ0) to 7-aminomethyl-7-deazaguanine (preQ1). This is NADPH-dependent 7-cyano-7-deazaguanine reductase from Thiobacillus denitrificans (strain ATCC 25259 / T1).